The following is a 334-amino-acid chain: Ketol-acid reductoisomerase (NADP(+)) (334 aa).

The region spanning methionine 1–threonine 181 is the KARI N-terminal Rossmann domain. Residues tyrosine 25–glutamine 28, arginine 48, serine 52, and aspartate 82–glutamine 85 each bind NADP(+). Residue histidine 107 is part of the active site. Glycine 133 is a binding site for NADP(+). The KARI C-terminal knotted domain occupies threonine 182–isoleucine 327. Mg(2+) contacts are provided by aspartate 190, glutamate 194, glutamate 226, and glutamate 230. Residue serine 251 coordinates substrate.

Belongs to the ketol-acid reductoisomerase family. The cofactor is Mg(2+).

It carries out the reaction (2R)-2,3-dihydroxy-3-methylbutanoate + NADP(+) = (2S)-2-acetolactate + NADPH + H(+). The enzyme catalyses (2R,3R)-2,3-dihydroxy-3-methylpentanoate + NADP(+) = (S)-2-ethyl-2-hydroxy-3-oxobutanoate + NADPH + H(+). It participates in amino-acid biosynthesis; L-isoleucine biosynthesis; L-isoleucine from 2-oxobutanoate: step 2/4. The protein operates within amino-acid biosynthesis; L-valine biosynthesis; L-valine from pyruvate: step 2/4. In terms of biological role, involved in the biosynthesis of branched-chain amino acids (BCAA). Catalyzes an alkyl-migration followed by a ketol-acid reduction of (S)-2-acetolactate (S2AL) to yield (R)-2,3-dihydroxy-isovalerate. In the isomerase reaction, S2AL is rearranged via a Mg-dependent methyl migration to produce 3-hydroxy-3-methyl-2-ketobutyrate (HMKB). In the reductase reaction, this 2-ketoacid undergoes a metal-dependent reduction by NADPH to yield (R)-2,3-dihydroxy-isovalerate. The polypeptide is Ketol-acid reductoisomerase (NADP(+)) (Staphylococcus aureus (strain USA300)).